The primary structure comprises 70 residues: Large ribosomal subunit protein eL38 (70 aa).

This sequence belongs to the eukaryotic ribosomal protein eL38 family.

The protein is Large ribosomal subunit protein eL38 (RPL38) of Branchiostoma belcheri (Amphioxus).